The chain runs to 693 residues: Lamina-associated polypeptide 2, isoforms alpha/zeta (693 aa).

In terms of domain architecture, LEM-like spans 5–48; that stretch reads LEDPSVLTKDKLKSELVANNVTLPAGEQRKDVYVQLYLQHLTAR. Disordered stretches follow at residues 48 to 113, 148 to 211, and 227 to 270; these read RNRP…DVTE, LREQ…LAST, and TRPP…KLAP. The interval 49-107 is linker; the sequence is NRPPLAAGANSKGPPDFSSDEEREPTPVLGSGASVGRGRGAVGRKATKKTDKPRLEDKD. Phosphoserine occurs at positions 59, 66, and 67. The residue at position 74 (Thr-74) is a Phosphothreonine. Phosphoserine is present on residues Ser-79 and Ser-82. 2 positions are modified to omega-N-methylarginine: Arg-85 and Arg-87. The segment covering 96–105 has biased composition (basic and acidic residues); sequence KKTDKPRLED. The LEM domain maps to 108–152; that stretch reads DLDVTELSNEELLDQLVRYGVNPGPIVGTTRKLYEKKLLKLREQG. Thr-153 is modified (phosphothreonine). Positions 154–177 are enriched in polar residues; sequence ESRSSTPLPTVSSSAENTRQNGSN. Residues Ser-155 and Ser-158 each carry the phosphoserine modification. Residues Thr-159 and Thr-163 each carry the phosphothreonine modification. 2 positions are modified to phosphoserine: Ser-165 and Ser-167. Residues 178–190 show a composition bias toward basic and acidic residues; the sequence is DSDRYSDNDEGKK. The Nuclear localization signal motif lies at 190 to 196; that stretch reads KKEHKKV. Ser-206 is modified (N6-acetyllysine). The segment covering 245-254 has biased composition (basic and acidic residues); sequence TKRDPPRETC. Ser-310 is modified (phosphoserine). Position 329 is an omega-N-methylarginine (Arg-329). Residues 332-351 are disordered; sequence KSRAQPLRAEEPGVSDQSVF. 5 positions are modified to phosphoserine: Ser-349, Ser-352, Ser-368, Ser-420, and Ser-422. The span at 412-422 shows a compositional bias: low complexity; it reads QSSYQDSESLS. A disordered region spans residues 412–442; that stretch reads QSSYQDSESLSPPRKVPRLSEKPARGGDSGS. The stretch at 557–656 forms a coiled coil; the sequence is TESCDKHLDL…MGRRYLWLKD (100 aa). Lys-655 is subject to N6-acetyllysine.

The protein belongs to the LEM family. As to quaternary structure, homooligomer. Interacts with LMNA, BANF1 and RB1 and with chromosomes. Associates directly or indirectly with lamins at specific cell-cycle stages. Interacts with CMTM6. Phosphorylated in a mitose-specific manner.

It localises to the nucleus. The protein resides in the chromosome. In terms of biological role, may be involved in the structural organization of the nucleus and in the post-mitotic nuclear assembly. Plays an important role, together with LMNA, in the nuclear anchorage of RB1. This is Lamina-associated polypeptide 2, isoforms alpha/zeta (Tmpo) from Mus musculus (Mouse).